Reading from the N-terminus, the 126-residue chain is Aspartate 1-decarboxylase (126 aa).

The Schiff-base intermediate with substrate; via pyruvic acid role is filled by S25. The residue at position 25 (S25) is a Pyruvic acid (Ser). Substrate is bound at residue T57. The Proton donor role is filled by Y58. 73–75 (GGA) is a substrate binding site.

This sequence belongs to the PanD family. As to quaternary structure, heterooctamer of four alpha and four beta subunits. Pyruvate serves as cofactor. In terms of processing, is synthesized initially as an inactive proenzyme, which is activated by self-cleavage at a specific serine bond to produce a beta-subunit with a hydroxyl group at its C-terminus and an alpha-subunit with a pyruvoyl group at its N-terminus.

It localises to the cytoplasm. It carries out the reaction L-aspartate + H(+) = beta-alanine + CO2. It functions in the pathway cofactor biosynthesis; (R)-pantothenate biosynthesis; beta-alanine from L-aspartate: step 1/1. Its function is as follows. Catalyzes the pyruvoyl-dependent decarboxylation of aspartate to produce beta-alanine. In Acinetobacter baylyi (strain ATCC 33305 / BD413 / ADP1), this protein is Aspartate 1-decarboxylase.